The primary structure comprises 341 residues: L-threonine 3-dehydrogenase (341 aa).

Residue cysteine 38 coordinates Zn(2+). Catalysis depends on charge relay system residues threonine 40 and histidine 43. 6 residues coordinate Zn(2+): histidine 63, glutamate 64, cysteine 93, cysteine 96, cysteine 99, and cysteine 107. Residues isoleucine 175, aspartate 195, arginine 200, leucine 262–isoleucine 264, and isoleucine 286–tyrosine 287 each bind NAD(+).

This sequence belongs to the zinc-containing alcohol dehydrogenase family. In terms of assembly, homotetramer. It depends on Zn(2+) as a cofactor.

Its subcellular location is the cytoplasm. The catalysed reaction is L-threonine + NAD(+) = (2S)-2-amino-3-oxobutanoate + NADH + H(+). Its pathway is amino-acid degradation; L-threonine degradation via oxydo-reductase pathway; glycine from L-threonine: step 1/2. Functionally, catalyzes the NAD(+)-dependent oxidation of L-threonine to 2-amino-3-ketobutyrate. This Proteus mirabilis (strain HI4320) protein is L-threonine 3-dehydrogenase.